The sequence spans 426 residues: 3-phosphoshikimate 1-carboxyvinyltransferase (426 aa).

Positions 22, 23, and 27 each coordinate 3-phosphoshikimate. Lys-22 contacts phosphoenolpyruvate. Residues Gly-96 and Arg-124 each contribute to the phosphoenolpyruvate site. 3-phosphoshikimate-binding residues include Ser-170, Ser-171, Gln-172, Ser-198, Asp-314, Asn-337, and Lys-341. A phosphoenolpyruvate-binding site is contributed by Gln-172. Asp-314 acts as the Proton acceptor in catalysis. Arg-345, Arg-387, and Lys-412 together coordinate phosphoenolpyruvate.

It belongs to the EPSP synthase family. Monomer.

Its subcellular location is the cytoplasm. It catalyses the reaction 3-phosphoshikimate + phosphoenolpyruvate = 5-O-(1-carboxyvinyl)-3-phosphoshikimate + phosphate. Its pathway is metabolic intermediate biosynthesis; chorismate biosynthesis; chorismate from D-erythrose 4-phosphate and phosphoenolpyruvate: step 6/7. Catalyzes the transfer of the enolpyruvyl moiety of phosphoenolpyruvate (PEP) to the 5-hydroxyl of shikimate-3-phosphate (S3P) to produce enolpyruvyl shikimate-3-phosphate and inorganic phosphate. The chain is 3-phosphoshikimate 1-carboxyvinyltransferase from Shewanella sp. (strain W3-18-1).